A 256-amino-acid chain; its full sequence is MAGHSKWANIKRQKERVDAKKGKTFAQLSRAIIVAAKHGIPDPAGNFQLRTAIEKAKAAGIPNDNIERAIAKGAGTYENDDTVYEEIRYEGYGVGGVAILIEAFTDNRNRTAADLRSAFNKNGGNLGETGCVSWMFEQKGVVRIEGNIDENALLEASMEGEADSYELYEEDDDQAAEVFTEMTNLDTLSQTLNDKNFNVTEVELRWIPNNLIYIENDEQAKSIIKLIEALESLDDVQNVTTNFEMADELMLLTVES.

It belongs to the TACO1 family.

It is found in the cytoplasm. The polypeptide is Probable transcriptional regulatory protein cce_0894 (Crocosphaera subtropica (strain ATCC 51142 / BH68) (Cyanothece sp. (strain ATCC 51142))).